The chain runs to 397 residues: Phosphoglycerate kinase (397 aa).

Residues 25–27 (DLN), arginine 41, 64–67 (HLGR), arginine 118, and arginine 151 each bind substrate. ATP contacts are provided by residues lysine 202, glutamate 324, and 350–353 (GGDT).

The protein belongs to the phosphoglycerate kinase family. As to quaternary structure, monomer.

The protein localises to the cytoplasm. The enzyme catalyses (2R)-3-phosphoglycerate + ATP = (2R)-3-phospho-glyceroyl phosphate + ADP. Its pathway is carbohydrate degradation; glycolysis; pyruvate from D-glyceraldehyde 3-phosphate: step 2/5. This chain is Phosphoglycerate kinase, found in Herminiimonas arsenicoxydans.